Consider the following 364-residue polypeptide: Monocarboxylate 2-oxoacid-binding periplasmic protein all3028 (364 aa).

Positions 1-26 (MKRREVLNTAAIATATTALVSCTQTN) are cleaved as a signal peptide. Substrate contacts are provided by residues 103-104 (YY), Gln-160, and Arg-181. Gln-160 contributes to the Na(+) binding site. Na(+) is bound by residues Glu-218, Trp-219, and Glu-244.

The protein belongs to the bacterial solute-binding protein 7 family. Homodimer. The complex comprises the extracytoplasmic solute receptor protein all3028, and the two putative transmembrane proteins alr3026 and alr3027.

The protein localises to the periplasm. Its activity is regulated as follows. Pyruvate uptake inhibited by 2-oxobutyrate, 2-oxovalerate, 2-oxoisovalerate, 2-oxoisocaproate and 2-oxo-3-methylvalerate. In terms of biological role, part of the tripartite ATP-independent periplasmic (TRAP) transport system involved in the uptake of monocarboxylate 2-oxoacids. This protein specifically binds monocarboxylate 2-oxoacids including pyruvate, 2-oxobutyrate, 2-oxovalerate, 2-oxoisovalerate, 2-oxoisocaproate and 2-oxo-3-methylvalerate. Is not able to bind mannitol. The polypeptide is Monocarboxylate 2-oxoacid-binding periplasmic protein all3028 (Nostoc sp. (strain PCC 7120 / SAG 25.82 / UTEX 2576)).